The following is a 981-amino-acid chain: Colossin-C (981 aa).

An N-terminal signal peptide occupies residues 1-23 (MKILYSLLLISSIILNTVLNISS). N63 carries N-linked (GlcNAc...) asparagine glycosylation. A disordered region spans residues 172–195 (EQTQPPTQPPTQPPTQPPTPPPFT). A compositionally biased stretch (pro residues) spans 177–194 (PTQPPTQPPTQPPTPPPF). N-linked (GlcNAc...) asparagine glycosylation is found at N222, N591, and N811.

This sequence belongs to the serine-aspartate repeat-containing protein (SDr) family.

Its subcellular location is the secreted. This is Colossin-C (colC) from Dictyostelium discoideum (Social amoeba).